Reading from the N-terminus, the 780-residue chain is RNA-binding protein Pasilla (780 aa).

3 disordered regions span residues 31 to 50 (LQHQ…QQLE), 76 to 113 (QPRH…SSSI), and 150 to 190 (QIES…ATAS). 3 stretches are compositionally biased toward low complexity: residues 79-91 (HSTT…STHS), 99-113 (SSNS…SSSI), and 176-190 (PNGT…ATAS). KH domains follow at residues 273 to 340 (TYHM…MEFI), 366 to 432 (DKQV…CKMI), and 691 to 758 (KDSK…QYLI). A disordered region spans residues 674-693 (AQLGGLSKSPTPGDLSSKDS). The required for RNA binding stretch occupies residues 686 to 776 (GDLSSKDSKN…TKRARQIPLT (91 aa)).

As to expression, expressed in the central nervous system in mushroom body neurons (at protein level).

It localises to the nucleus. Its subcellular location is the cytoplasm. Functionally, functions to regulate alternative splicing in neurons by binding pre-mRNA in a sequence-specific manner to activate exon inclusion. Plays a role in long-term memory formation by processing the unspliced Orb2-isoform A (Orb2A) mRNA and thereby controlling Orb2A protein abundance. The sequence is that of RNA-binding protein Pasilla from Drosophila melanogaster (Fruit fly).